We begin with the raw amino-acid sequence, 342 residues long: Dihydroorotase (342 aa).

Histidine 13 and histidine 15 together coordinate Zn(2+). Substrate is bound by residues histidine 15–arginine 17 and asparagine 41. The Zn(2+) site is built by lysine 98, histidine 135, and histidine 173. Lysine 98 bears the N6-carboxylysine mark. Histidine 135 lines the substrate pocket. A substrate-binding site is contributed by leucine 218. Residue aspartate 246 coordinates Zn(2+). Aspartate 246 is an active-site residue. Positions 250 and 262 each coordinate substrate.

This sequence belongs to the metallo-dependent hydrolases superfamily. DHOase family. Class II DHOase subfamily. As to quaternary structure, homodimer. Zn(2+) serves as cofactor.

The enzyme catalyses (S)-dihydroorotate + H2O = N-carbamoyl-L-aspartate + H(+). It functions in the pathway pyrimidine metabolism; UMP biosynthesis via de novo pathway; (S)-dihydroorotate from bicarbonate: step 3/3. In terms of biological role, catalyzes the reversible cyclization of carbamoyl aspartate to dihydroorotate. The chain is Dihydroorotase from Vibrio atlanticus (strain LGP32) (Vibrio splendidus (strain Mel32)).